Here is a 78-residue protein sequence, read N- to C-terminus: Large ribosomal subunit protein bL28 (78 aa).

Residues 1–31 (MAAHCQVTGAEPGFGHSISHSHRRNKRRFDP) form a disordered region.

The protein belongs to the bacterial ribosomal protein bL28 family.

This Paenarthrobacter aurescens (strain TC1) protein is Large ribosomal subunit protein bL28.